Reading from the N-terminus, the 311-residue chain is Taste receptor type 2 member 9 (311 aa).

The Extracellular segment spans residues 1–9; the sequence is MPSTIEAIY. Residues 10–32 form a helical membrane-spanning segment; it reads IILIAGELTIGIWGNGFIVLVNC. Residues 33–52 are Cytoplasmic-facing; the sequence is IDWLKRRDVSLIDIILISLA. The helical transmembrane segment at 53-72 threads the bilayer; that stretch reads ISRICLLCVISLDGFFILLF. At 73–86 the chain is on the extracellular side; it reads PGTYDINVLESIMD. A helical membrane pass occupies residues 87-109; it reads AVWTFANNSSLWFTSCLSIFYLL. Over 110–128 the chain is Cytoplasmic; sequence KIANISHPFFFWLKLKINK. A helical transmembrane segment spans residues 129–146; the sequence is VILAILLGSFLISLIISF. Over 147–179 the chain is Extracellular; that stretch reads PINGXWYHLFKVSHEENITWAFKVSTIPGAFKQ. Asn163 carries N-linked (GlcNAc...) asparagine glycosylation. The chain crosses the membrane as a helical span at residues 180-202; the sequence is LTLNLGAMVPFMLCLISFFLLLF. Residues 203–233 lie on the Cytoplasmic side of the membrane; that stretch reads SLVRHTKQIQLHATGLRDPSTEAHMRAIKAV. A helical transmembrane segment spans residues 234-256; the sequence is IIFLLLLIVYYPVFLVMTSSTLI. At 257–260 the chain is on the extracellular side; that stretch reads PQGK. A helical membrane pass occupies residues 261-283; it reads LVLMIGDIVTVIFPSSHSFILIM. Topologically, residues 284 to 311 are cytoplasmic; it reads GNSKLREAFLKMLRFVKGFLRRRKPFGP.

This sequence belongs to the G-protein coupled receptor T2R family.

The protein localises to the membrane. Its function is as follows. Gustducin-coupled receptor implicated in the perception of bitter compounds in the oral cavity and the gastrointestinal tract. Signals through PLCB2 and the calcium-regulated cation channel TRPM5. This is Taste receptor type 2 member 9 (TAS2R9) from Papio hamadryas (Hamadryas baboon).